The chain runs to 578 residues: uncharacterized protein (578 aa).

This is an uncharacterized protein from Ostreid herpesvirus 1 (isolate France) (OsHV-1).